A 378-amino-acid polypeptide reads, in one-letter code: Outer membrane protein (378 aa).

An N-terminal signal peptide occupies residues 1-22 (MRLRTALLATTLMAAAPVAANA). An OmpA-like domain is found at 258–378 (PPAPTPARTY…QNRRVEIILH (121 aa)).

The protein localises to the cell outer membrane. Its function is as follows. Growth enhancer. This Gluconacetobacter diazotrophicus (strain ATCC 49037 / DSM 5601 / CCUG 37298 / CIP 103539 / LMG 7603 / PAl5) protein is Outer membrane protein.